Here is a 584-residue protein sequence, read N- to C-terminus: A-type ATP synthase subunit A (584 aa).

233–240 lines the ATP pocket; the sequence is GPFGSGKT.

Belongs to the ATPase alpha/beta chains family. Has multiple subunits with at least A(3), B(3), C, D, E, F, H, I and proteolipid K(x).

The protein resides in the cell membrane. The enzyme catalyses ATP + H2O + 4 H(+)(in) = ADP + phosphate + 5 H(+)(out). Its function is as follows. Component of the A-type ATP synthase that produces ATP from ADP in the presence of a proton gradient across the membrane. The A chain is the catalytic subunit. The sequence is that of A-type ATP synthase subunit A from Methanobrevibacter smithii (strain ATCC 35061 / DSM 861 / OCM 144 / PS).